The following is a 111-amino-acid chain: 2Fe-2S ferredoxin (111 aa).

The 103-residue stretch at 5–107 (IKVTFVINNG…GIKVRLPSAT (103 aa)) folds into the 2Fe-2S ferredoxin-type domain. Positions 42, 48, 51, and 88 each coordinate [2Fe-2S] cluster.

It belongs to the adrenodoxin/putidaredoxin family. It depends on [2Fe-2S] cluster as a cofactor.

Ferredoxin are iron-sulfur proteins that transfer electrons in a wide variety of metabolic reactions. This chain is 2Fe-2S ferredoxin (fdxB), found in Rickettsia bellii (strain RML369-C).